Reading from the N-terminus, the 611-residue chain is Rop guanine nucleotide exchange factor 5 (611 aa).

The segment at 1 to 62 (MENLVKSCAG…PPPPPSQILG (62 aa)) is disordered. A compositionally biased stretch (low complexity) spans 34–51 (STSGASYESSSTTTVASS). The PRONE domain maps to 93–477 (FKAKEMNSAD…DLTKQSDDNN (385 aa)). Disordered stretches follow at residues 513-541 (TTPG…TNKI) and 588-611 (DVEE…YTVS). Residues 525–541 (KKGERRTPYSSKDTNKI) show a composition bias toward basic and acidic residues.

Its function is as follows. Guanine-nucleotide exchange factor (GEF) that acts as an activator of Rop (Rho of plants) GTPases by promoting the exchange of GDP for GTP. The protein is Rop guanine nucleotide exchange factor 5 (ROPGEF5) of Arabidopsis thaliana (Mouse-ear cress).